We begin with the raw amino-acid sequence, 305 residues long: Methionyl-tRNA formyltransferase (305 aa).

111–114 contributes to the (6S)-5,6,7,8-tetrahydrofolate binding site; sequence SLLP.

It belongs to the Fmt family.

It carries out the reaction L-methionyl-tRNA(fMet) + (6R)-10-formyltetrahydrofolate = N-formyl-L-methionyl-tRNA(fMet) + (6S)-5,6,7,8-tetrahydrofolate + H(+). Attaches a formyl group to the free amino group of methionyl-tRNA(fMet). The formyl group appears to play a dual role in the initiator identity of N-formylmethionyl-tRNA by promoting its recognition by IF2 and preventing the misappropriation of this tRNA by the elongation apparatus. The protein is Methionyl-tRNA formyltransferase of Campylobacter jejuni subsp. jejuni serotype O:6 (strain 81116 / NCTC 11828).